The chain runs to 283 residues: Gap junction beta-1 protein (283 aa).

Residues 1–22 are Cytoplasmic-facing; that stretch reads MNWTGLYTLLSGVNRHSTAIGR. Residues 23-45 form a helical membrane-spanning segment; the sequence is VWLSVIFIFRIMVLVVAAESVWG. The Extracellular portion of the chain corresponds to 46 to 75; the sequence is DEKSSFICNTLQPGCNSVCYDHFFPISHVR. The helical transmembrane segment at 76–95 threads the bilayer; that stretch reads LWSLQLILVSTPALLVAMHV. The Cytoplasmic portion of the chain corresponds to 96-130; it reads AHQQHIEKKMLRLEGHGDPLHLEEVKRHKVHISGT. A helical membrane pass occupies residues 131 to 153; it reads LWWTYVISVVFRLLFEAVFMYVF. Residues 154–191 are Extracellular-facing; sequence YLLYPGYAMVRLVKCEAFPCPNTVDCFVSRPTEKTVFT. The helical transmembrane segment at 192 to 214 threads the bilayer; sequence VFMLAASGICIILNVAEVVYLII. Over 215 to 283 the chain is Cytoplasmic; the sequence is RACARRAQRR…AEKSDRCSAC (69 aa). 4 positions are modified to phosphoserine: serine 233, serine 258, serine 266, and serine 277.

This sequence belongs to the connexin family. Beta-type (group I) subfamily. A connexon is composed of a hexamer of connexins. Interacts with CNST.

It is found in the cell membrane. Its subcellular location is the cell junction. The protein localises to the gap junction. In terms of biological role, one gap junction consists of a cluster of closely packed pairs of transmembrane channels, the connexons, through which materials of low MW diffuse from one cell to a neighboring cell. This chain is Gap junction beta-1 protein (Gjb1), found in Mus musculus (Mouse).